The sequence spans 498 residues: Protein MGF 505-5R (498 aa).

The protein belongs to the asfivirus MGF 505 family.

Plays a role in virus cell tropism, and may be required for efficient virus replication in macrophages. The polypeptide is Protein MGF 505-5R (Ornithodoros (relapsing fever ticks)).